Here is a 99-residue protein sequence, read N- to C-terminus: uncharacterized protein (99 aa).

2 disordered regions span residues 1–24 and 49–99; these read MKAT…VRAT and SVRT…RCAT. Basic residues-rich tracts occupy residues 15 to 24 and 71 to 81; these read VRRRRRVRAT and SRRRGRPRSSR.

This is an uncharacterized protein from Streptomyces fradiae (Streptomyces roseoflavus).